The sequence spans 79 residues: CDC42 small effector protein 1 (79 aa).

Residues cysteine 10 and cysteine 11 are each lipidated (S-palmitoyl cysteine). One can recognise a CRIB domain in the interval 30–43 (IGEPMNFVHLTHIG). The segment at 48–79 (GAGDGLAMTGAVQEQMRSKGNRDRPWSNSRAL) is disordered. Residues 63–72 (MRSKGNRDRP) show a composition bias toward basic and acidic residues.

Belongs to the CDC42SE/SPEC family. In terms of assembly, interacts with CDC42 (in GTP-bound form). Interacts weakly with RAC1 and not at all with RHOA.

The protein localises to the cytoplasm. It is found in the cytoskeleton. Its subcellular location is the cell membrane. In terms of biological role, probably involved in the organization of the actin cytoskeleton by acting downstream of CDC42, inducing actin filament assembly. Alters CDC42-induced cell shape changes. In activated T-cells, may play a role in CDC42-mediated F-actin accumulation at the immunological synapse. May play a role in early contractile events in phagocytosis in macrophages. The chain is CDC42 small effector protein 1 (Cdc42se1) from Rattus norvegicus (Rat).